Here is a 445-residue protein sequence, read N- to C-terminus: Phosphoglucosamine mutase (445 aa).

The active-site Phosphoserine intermediate is S99. Residues S99, D242, D244, and D246 each coordinate Mg(2+). Position 99 is a phosphoserine (S99).

The protein belongs to the phosphohexose mutase family. Mg(2+) serves as cofactor. Post-translationally, activated by phosphorylation.

The catalysed reaction is alpha-D-glucosamine 1-phosphate = D-glucosamine 6-phosphate. Functionally, catalyzes the conversion of glucosamine-6-phosphate to glucosamine-1-phosphate. The chain is Phosphoglucosamine mutase from Campylobacter jejuni subsp. jejuni serotype O:23/36 (strain 81-176).